Here is a 147-residue protein sequence, read N- to C-terminus: NADH-quinone oxidoreductase subunit A (147 aa).

3 helical membrane passes run 13–33, 70–90, and 104–124; these read LFSYAVAIVVLLAAMLGLGAV, YLVAMLFVIFDVESVFLFSWA, and VVVFVASLAAALAYVWRWGAL.

It belongs to the complex I subunit 3 family. In terms of assembly, NDH-1 is composed of 14 different subunits. Subunits NuoA, H, J, K, L, M, N constitute the membrane sector of the complex.

The protein resides in the cell inner membrane. The catalysed reaction is a quinone + NADH + 5 H(+)(in) = a quinol + NAD(+) + 4 H(+)(out). In terms of biological role, NDH-1 shuttles electrons from NADH, via FMN and iron-sulfur (Fe-S) centers, to quinones in the respiratory chain. The immediate electron acceptor for the enzyme in this species is believed to be ubiquinone. Couples the redox reaction to proton translocation (for every two electrons transferred, four hydrogen ions are translocated across the cytoplasmic membrane), and thus conserves the redox energy in a proton gradient. This is NADH-quinone oxidoreductase subunit A from Gluconacetobacter diazotrophicus (strain ATCC 49037 / DSM 5601 / CCUG 37298 / CIP 103539 / LMG 7603 / PAl5).